A 223-amino-acid chain; its full sequence is Small ribosomal subunit protein uS11m (223 aa).

The N-terminal 38 residues, 1–38 (MVLKHSVTYNLSFFISFTFSSIFFSSLILFLVYKSVLS), are a transit peptide targeting the mitochondrion.

Belongs to the universal ribosomal protein uS11 family. As to quaternary structure, component of the mitochondrial small ribosomal subunit (mt-SSU). Mature yeast 74S mitochondrial ribosomes consist of a small (37S) and a large (54S) subunit. The 37S small subunit contains a 15S ribosomal RNA (15S mt-rRNA) and at least 32 different proteins. The 54S large subunit contains a 21S rRNA (21S mt-rRNA) and at least 45 different proteins.

Its subcellular location is the mitochondrion. Its function is as follows. Component of the mitochondrial ribosome (mitoribosome), a dedicated translation machinery responsible for the synthesis of mitochondrial genome-encoded proteins, including at least some of the essential transmembrane subunits of the mitochondrial respiratory chain. The mitoribosomes are attached to the mitochondrial inner membrane and translation products are cotranslationally integrated into the membrane. This is Small ribosomal subunit protein uS11m (mrps18) from Schizosaccharomyces pombe (strain 972 / ATCC 24843) (Fission yeast).